The chain runs to 3329 residues: Breast cancer type 2 susceptibility protein homolog (3329 aa).

The tract at residues M1–P40 is interaction with PALB2. 2 disordered regions span residues S37 to P69 and E207 to S241. 2 positions are modified to phosphoserine: S435 and S481. The segment at P628–F650 is disordered. The segment at P628–V979 is interaction with NPM1. Position 735 is a phosphoserine (S735). Positions E934–K953 are enriched in basic and acidic residues. Residues E934 to N965 form a disordered region. Polar residues predominate over residues S954–N965. BRCA2 repeat units follow at residues N981–E1015 and N1192–N1226. The interaction with RAD51 stretch occupies residues H982–E2035. A disordered region spans residues N1296 to S1340. The segment covering Y1303 to G1323 has biased composition (polar residues). 5 BRCA2 repeats span residues I1394–D1428, K1491–Y1525, T1623–D1657, P1924–G1958, and N2004–L2038. S2048 carries the post-translational modification Phosphoserine. The segment at N2073–T2099 is disordered. The segment covering S2074 to T2099 has biased composition (polar residues). The tract at residues K2219–S2285 is interaction with HSF2BP. The interval T2298–V2466 is interaction with FANCD2. Residues F2361 to H2393 form a disordered region. Over residues K2377–H2393 the composition is skewed to basic and acidic residues. An interaction with SEM1 region spans residues M2402–E2753. Residues A2603 to T2619 carry the Nuclear export signal; masked by interaction with SEM1 motif. Phosphoserine; by CDK1 and CDK2 is present on S3214. 2 disordered regions span residues F3221–P3257 and Q3273–S3329. S3241 is subject to Phosphoserine. Positions S3309–S3329 are enriched in basic and acidic residues.

Monomer and dimer. Interacts with RAD51; regulates RAD51 recruitment and function at sites of DNA repair. Interacts with SEM1, WDR16, USP11, DMC1, ROCK2 and NPM1. Interacts with both nonubiquitinated and monoubiquitinated FANCD2; this complex also includes XRCC3 and phosphorylated FANCG. Part of a BRCA complex containing BRCA1, BRCA2 and PALB2. Component of the homologous recombination repair (HR) complex composed of ERCC5/XPG, BRCA2, PALB2, DSS1 and RAD51. Within the complex, interacts with ERCC5/XPG and PALB2. Interacts directly with PALB2 which may serve as a scaffold for a HR complex containing PALB2, BRCA2, RAD51C, RAD51 and XRCC3. Interacts with BRCA1 only in the presence of PALB2 which serves as the bridging protein. Interacts with POLH; the interaction is direct. Interacts with the TREX-2 complex subunits PCID2 and SEM1. Interacts with HSF2BP and BRME1; the interaction with HSF2BP is direct and allows the formation of a ternary complex. The complex BRME1:HSF2BP:BRCA2 interacts with SPATA22, MEIOB and RAD51. Post-translationally, phosphorylated by ATM upon irradiation-induced DNA damage. Phosphorylation by CHEK1 and CHEK2 regulates interaction with RAD51. Phosphorylation at Ser-3291 by CDK1 and CDK2 is low in S phase when recombination is active, but increases as cells progress towards mitosis; this phosphorylation prevents homologous recombination-dependent repair during S phase and G2 by inhibiting RAD51 binding. In terms of processing, ubiquitinated in the absence of DNA damage; this does not lead to proteasomal degradation. In contrast, ubiquitination in response to DNA damage leads to proteasomal degradation. As to expression, widely expressed. Highest expression in cerebellum, testis, ileum, appendix, epididymis, ovary and mammary gland. No expression in lung.

The protein resides in the nucleus. Its subcellular location is the cytoplasm. The protein localises to the cytoskeleton. It localises to the microtubule organizing center. It is found in the centrosome. Functionally, involved in double-strand break repair and/or homologous recombination. Binds RAD51 and potentiates recombinational DNA repair by promoting assembly of RAD51 onto single-stranded DNA (ssDNA). Acts by targeting RAD51 to ssDNA over double-stranded DNA, enabling RAD51 to displace replication protein-A (RPA) from ssDNA and stabilizing RAD51-ssDNA filaments by blocking ATP hydrolysis. Part of a PALB2-scaffolded HR complex containing RAD51C and which is thought to play a role in DNA repair by HR. May participate in S phase checkpoint activation. Binds selectively to ssDNA, and to ssDNA in tailed duplexes and replication fork structures. May play a role in the extension step after strand invasion at replication-dependent DNA double-strand breaks; together with PALB2 is involved in both POLH localization at collapsed replication forks and DNA polymerization activity. In concert with NPM1, regulates centrosome duplication. Interacts with the TREX-2 complex (transcription and export complex 2) subunits PCID2 and SEM1, and is required to prevent R-loop-associated DNA damage and thus transcription-associated genomic instability, independently of its known role in homologous recombination. In Mus musculus (Mouse), this protein is Breast cancer type 2 susceptibility protein homolog.